Consider the following 348-residue polypeptide: Ion-translocating oxidoreductase complex subunit D (348 aa).

A run of 3 helical transmembrane segments spans residues 20–39 (LMKWVAICALPGLLAQTYFF), 72–91 (ALRDYSAVVTAWLLSVAIPP), and 120–140 (PFNPAMVAYVVLLISFPVQMT). An FMN phosphoryl threonine modification is found at Thr-187. A run of 5 helical transmembrane segments spans residues 214–234 (LAGVGWEWVNLAYLIGGLVLI), 241–261 (WHIPVAFLGSLTLFSLMFLMF), 266–286 (TASPTIHLLSGATMLGAFFIA), 300–320 (LVFGALIGGLVFIIRSWGGFP), and 321–341 (DGVAFAVLLANMCVPLIDYYT).

This sequence belongs to the NqrB/RnfD family. As to quaternary structure, the complex is composed of six subunits: RnfA, RnfB, RnfC, RnfD, RnfE and RnfG. FMN serves as cofactor.

The protein resides in the cell inner membrane. Its function is as follows. Part of a membrane-bound complex that couples electron transfer with translocation of ions across the membrane. This chain is Ion-translocating oxidoreductase complex subunit D, found in Vibrio atlanticus (strain LGP32) (Vibrio splendidus (strain Mel32)).